Consider the following 311-residue polypeptide: Beta-ketoacyl-[acyl-carrier-protein] synthase III (311 aa).

Residues C114 and H238 contribute to the active site. An ACP-binding region spans residues 239-243 (QANIR). N268 is an active-site residue.

The protein belongs to the thiolase-like superfamily. FabH family. Homodimer.

The protein resides in the cytoplasm. The enzyme catalyses malonyl-[ACP] + acetyl-CoA + H(+) = 3-oxobutanoyl-[ACP] + CO2 + CoA. Its pathway is lipid metabolism; fatty acid biosynthesis. In terms of biological role, catalyzes the condensation reaction of fatty acid synthesis by the addition to an acyl acceptor of two carbons from malonyl-ACP. Catalyzes the first condensation reaction which initiates fatty acid synthesis and may therefore play a role in governing the total rate of fatty acid production. Possesses both acetoacetyl-ACP synthase and acetyl transacylase activities. Its substrate specificity determines the biosynthesis of branched-chain and/or straight-chain of fatty acids. This is Beta-ketoacyl-[acyl-carrier-protein] synthase III from Neorickettsia sennetsu (strain ATCC VR-367 / Miyayama) (Ehrlichia sennetsu).